The primary structure comprises 629 residues: (-)-alpha-pinene synthase, chloroplastic (629 aa).

The transit peptide at 1 to 48 (MSPVSVISLPSDLCLPTSFIDRSGRELIPLHITIPNVAMRRQGKLMTR) directs the protein to the chloroplast. Asp-380, Asp-384, and Asp-532 together coordinate Mg(2+). Residues 380–384 (DDMYD) carry the DDXXD motif motif. Ser-540 is a binding site for K(+).

It belongs to the terpene synthase family. Tpsd subfamily. It depends on Mg(2+) as a cofactor. The cofactor is Mn(2+). K(+) is required as a cofactor.

The protein resides in the plastid. It is found in the chloroplast. It carries out the reaction (2E)-geranyl diphosphate = (1S,5S)-alpha-pinene + diphosphate. The protein operates within terpene metabolism; oleoresin biosynthesis. In terms of biological role, involved in defensive oleoresin formation in conifers in response to insect attack or other injury. Involved in monoterpene (C10) olefins biosynthesis. Produces mainly (-)-alpha-pinene (79%) and lesser amounts of (-)-beta-pinene (4.2%), nearly racemic mixtures of camphene (2.8% (+)/2.2% (-)) and limonene (2.4% (+)/3.7% (-)), as well as small amounts of (+)-alpha-pinene (3.3%) and (+)-beta-pinene (2.4%). The polypeptide is (-)-alpha-pinene synthase, chloroplastic (PT1) (Pinus taeda (Loblolly pine)).